The primary structure comprises 486 residues: Odorant receptor coreceptor (486 aa).

Residues Met1–Ser47 are Cytoplasmic-facing. The helical transmembrane segment at Val48–Ala68 threads the bilayer. Topologically, residues Glu69 to Ser75 are extracellular. Residues Gly76–Val96 traverse the membrane as a helical segment. Residues Asn97–Leu135 lie on the Cytoplasmic side of the membrane. Residues Phe136 to Phe156 form a helical membrane-spanning segment. Residues Gly157–His191 are Extracellular-facing. Asn169 and Asn188 each carry an N-linked (GlcNAc...) asparagine glycan. Residues Gly192–His212 traverse the membrane as a helical segment. Topologically, residues Ser213–Leu351 are cytoplasmic. A helical transmembrane segment spans residues Val352–Ile372. Over Lys373–Tyr390 the chain is Extracellular. A helical membrane pass occupies residues Ala391 to Phe411. Residues Gly412–Thr462 are Cytoplasmic-facing. A helical transmembrane segment spans residues Val463 to Val483. At Gln484 to Lys486 the chain is on the extracellular side.

Belongs to the insect chemoreceptor superfamily. Heteromeric odorant receptor channel (TC 1.A.69) family. Orco subfamily. Heterodimer with conventional odorant receptors (ORs). Complexes exist early in the endomembrane system in olfactory sensory neurons (OSNs), coupling these complexes to the conserved ciliary trafficking pathway. As to expression, expression is restricted to olfactory sensory neurons (OSNs). Coexpressed with Snmp in a lateral-distal population of OSNs. Expressed in the embryonic antennal-maxillary complex, in all 21 OSNs of the larval dorsal organ, in the pupal antennal OSNs, in all 120 adult maxillary palp neurons and in approximately 70-80% of adult antennal OSNs, where expression is highest at the dorsal-medial edge. Localized to OSN cell bodies and to the distal portion of ciliated OSN dendrites.

The protein resides in the cell membrane. In terms of biological role, odorant coreceptor which complexes with conventional odorant receptors (ORs) to form odorant-sensing units, providing sensitive and prolonged odorant signaling and calcium permeability. Orco is a universal and integral part of the functional odorant receptor, involved in the dendritic localization of other olfactory receptors. Expression of Orco alone leads to formation of rapid and transient ion channels not directly responding to odorants, but directly activated by intracellular cAMP or cGMP. Snmp, Or67d and lush act in concert to capture fatty-acid-derived male pheromone 11-cis vaccenyl acetate (cVA) molecules on the surface of Or67d expressing olfactory dendrites and facilitate their transfer to the odorant-receptor Orco complex. This Drosophila melanogaster (Fruit fly) protein is Odorant receptor coreceptor (Orco).